Consider the following 238-residue polypeptide: TKPLDRELIARFHLRAHAVDINGNRVENPIDIVINVIDMNDNRPEFLHQVWNGSVPEGSKPGTYVMTVTAIDADDPNALNGMLRYRILSQAPSTPSPNMFTINNETGDIITVAAGLDREKVQQYTLIIQATDMEGNPTYGLSNTATAVITVTDVNDNPPEFTAMTFYGEVPENRVEVIVANLTVTDKDQPHTPAWNAVYRISGGDPTGRFAIHTDPNSNDGLVTVVKPIDFETNRMFV.

Cadherin domains lie at 1-46 (TKPL…RPEF), 47-161 (LHQV…PPEF), and 162-238 (TAMT…RMFV). Over 1–238 (TKPLDRELIA…IDFETNRMFV (238 aa)) the chain is Extracellular. 7 residues coordinate Ca(2+): aspartate 5, glutamate 7, aspartate 38, methionine 39, asparagine 40, aspartate 41, and asparagine 42. The N-linked (GlcNAc...) asparagine glycan is linked to asparagine 52. Residues aspartate 72, aspartate 74, and asparagine 80 each coordinate Ca(2+). A glycan (N-linked (GlcNAc...) asparagine) is linked at asparagine 104. Ca(2+) is bound at residue aspartate 132. Asparagine 181 carries N-linked (GlcNAc...) asparagine glycosylation.

As to quaternary structure, homodimer (via extracellular region). Can also form heterodimers with other cadherins (via extracellular region). Dimerization occurs in trans, i.e. with a cadherin chain from another cell. Interacts with CDCP1. Interacts with PCDH8; this complex may also include TAOK2. The interaction with PCDH8 may lead to internalization through TAOK2/p38 MAPK pathway. Identified in a complex containing FGFR4, NCAM1, CDH2, PLCG1, FRS2, SRC, SHC1, GAP43 and CTTN. May interact with OBSCN (via protein kinase domain 2). Post-translationally, cleaved by MMP24. Ectodomain cleavage leads to the generation of a soluble 90 kDa N-terminal soluble fragment and a 45 kDa membrane-bound C-terminal fragment 1 (CTF1), which is further cleaved by gamma-secretase into a 35 kDa. Cleavage in neural stem cells by MMP24 affects CDH2-mediated anchorage of neural stem cells to ependymocytes in the adult subependymal zone, leading to modulate neural stem cell quiescence. In terms of processing, may be phosphorylated by OBSCN.

It is found in the cell membrane. Its subcellular location is the sarcolemma. The protein localises to the cell junction. It localises to the cell surface. The protein resides in the desmosome. It is found in the adherens junction. Calcium-dependent cell adhesion protein; preferentially mediates homotypic cell-cell adhesion by dimerization with a CDH2 chain from another cell. Cadherins may thus contribute to the sorting of heterogeneous cell types. Acts as a regulator of neural stem cells quiescence by mediating anchorage of neural stem cells to ependymocytes in the adult subependymal zone: upon cleavage by MMP24, CDH2-mediated anchorage is affected, leading to modulate neural stem cell quiescence. Plays a role in cell-to-cell junction formation between pancreatic beta cells and neural crest stem (NCS) cells, promoting the formation of processes by NCS cells. Required for proper neurite branching. Required for pre- and postsynaptic organization. CDH2 may be involved in neuronal recognition mechanism. In hippocampal neurons, may regulate dendritic spine density. The chain is Cadherin-2 (CDH2) from Cricetulus griseus (Chinese hamster).